The primary structure comprises 169 residues: Sorting nexin-24 (169 aa).

An N-acetylmethionine modification is found at M1. The PX domain maps to 1-125 (MEVYIPSFRY…SFDETESEES (125 aa)). 4 residues coordinate a 1,2-diacyl-sn-glycero-3-phospho-(1D-myo-inositol-3-phosphate): R38, S40, K61, and R74. 2 positions are modified to phosphoserine: S113 and S116.

This sequence belongs to the sorting nexin family.

The protein resides in the cytoplasmic vesicle membrane. In terms of biological role, may be involved in several stages of intracellular trafficking. This Homo sapiens (Human) protein is Sorting nexin-24 (SNX24).